Reading from the N-terminus, the 685-residue chain is MIDQYKHQQLRIGPVSPQQIRAWANKILPNGEIIGEVTKPYTFHYKTNKPEKDGLFCERISGPIKSGICACGNYRVIGAEKEDPKFCEQCGVEFVDSRIRRYQMGYIKLACPATHVWYLKRLPSYIANLLDKPLKELEGLVYCDVFSFARPISKKPTFLRLRGSFEYEIQSWKYSIPLFFTNQSFETFRNREISTGAGAIREQLADSDLQIILNNSLVEWKELGDEEVIGTGNEWEDRKIRRRKDFLVKRMELAKHFIRTNVEPKRMVLCLLPVLPPELRPIIQIDGGKLMSSDINELYRRVIYRNNTLTDLLATSRSMPGELVMCQEKLVQEAVDTLLDNGIRGQPMKDGHNKVYKSFSDVIEGKEGRFRETLLGKRVDYSGRSVIVVGPSLSLHQCGLPREIAIELFQTFLIHGLIKQHVASNIGIAKSKIREKEPIVWEILQEVMRGHPILLNRAPTLHRLGIQAFQPILVEERAICLHPLVCRGFNADFDGDQMAVHVPLSLEAQAEARLLMFSHMNLLSPAIGDPISVPTQDMLIGLYVLTIGNRRGICANRYNTYNCRNSQNKILNNNKYNYIKMKATYCCSSYDALGAYRQKRIDLDSPLWLRWRLDQRVIGSREVPIEIQYESLGTYHEIYRHYLIVRSVKKKIRWIYIRTTIGHISFYREIEEAVQGFCWAYSYVI.

4 residues coordinate Zn(2+): Cys69, Cys71, Cys87, and Cys90. Positions 492, 494, and 496 each coordinate Mg(2+).

Belongs to the RNA polymerase beta' chain family. RpoC1 subfamily. In terms of assembly, in plastids the minimal PEP RNA polymerase catalytic core is composed of four subunits: alpha, beta, beta', and beta''. When a (nuclear-encoded) sigma factor is associated with the core the holoenzyme is formed, which can initiate transcription. Requires Mg(2+) as cofactor. Zn(2+) is required as a cofactor.

It localises to the plastid. The protein resides in the chloroplast. It carries out the reaction RNA(n) + a ribonucleoside 5'-triphosphate = RNA(n+1) + diphosphate. DNA-dependent RNA polymerase catalyzes the transcription of DNA into RNA using the four ribonucleoside triphosphates as substrates. The sequence is that of DNA-directed RNA polymerase subunit beta' from Dioscorea elephantipes (Elephant's foot yam).